A 629-amino-acid polypeptide reads, in one-letter code: tRNA uridine 5-carboxymethylaminomethyl modification enzyme MnmG (629 aa).

Residues 13–18 (GGGHAG), Val125, and Ser180 each bind FAD. 273 to 287 (GPRYCPSIEDKVMRF) provides a ligand contact to NAD(+). Gln370 contacts FAD.

Belongs to the MnmG family. Homodimer. Heterotetramer of two MnmE and two MnmG subunits. Requires FAD as cofactor.

Its subcellular location is the cytoplasm. NAD-binding protein involved in the addition of a carboxymethylaminomethyl (cmnm) group at the wobble position (U34) of certain tRNAs, forming tRNA-cmnm(5)s(2)U34. The sequence is that of tRNA uridine 5-carboxymethylaminomethyl modification enzyme MnmG from Escherichia coli O45:K1 (strain S88 / ExPEC).